Consider the following 370-residue polypeptide: Coiled-coil domain-containing protein 89 (370 aa).

Residues Met-1–Lys-21 form a disordered region. Thr-12 carries the post-translational modification Phosphothreonine. The stretch at Lys-36–Ala-346 forms a coiled coil.

It belongs to the CCDC89 family. Interacts with HEY1. Expression is restricted to the adult testis, where localization is almost exclusive to round spermatids.

The protein localises to the cytoplasm. Its subcellular location is the nucleus. The chain is Coiled-coil domain-containing protein 89 from Mus musculus (Mouse).